The sequence spans 207 residues: uncharacterized protein (207 aa).

To M.leprae ML1660.

This is an uncharacterized protein from Mycobacterium tuberculosis (strain CDC 1551 / Oshkosh).